Here is a 210-residue protein sequence, read N- to C-terminus: GTP pyrophosphokinase YwaC (210 aa).

The protein belongs to the RelA/SpoT family. In terms of assembly, homotetramer.

The enzyme catalyses GTP + ATP = guanosine 3'-diphosphate 5'-triphosphate + AMP. The protein operates within purine metabolism; ppGpp biosynthesis; ppGpp from GTP: step 1/2. Functions as a (p)ppGpp synthase; GDP can be used instead of GTP, resulting in an increase of (p)ppGpp synthesis. Overexpression in relA mutants (triple relA-yjbM-ywaC deletions and single relA deletions) leads to growth arrest; GTP levels fall drastically, various guanine-related nucleotides are synthesized (ppGp or pGpp), the cellular transcriptional profile changes dramatically and 70S ribosome dimerization occurs. Overexpression in the presence of a wild-type relA gene does not have these effects. In eubacteria ppGpp (guanosine 3'-diphosphate 5'-diphosphate) is a mediator of the stringent response that coordinates a variety of cellular activities in response to changes in nutritional abundance. activities in response to changes in nutritional abundance. YwaC has probably a minor role in stringent response. In Bacillus subtilis (strain 168), this protein is GTP pyrophosphokinase YwaC (ywaC).